The primary structure comprises 640 residues: Threonine--tRNA ligase (640 aa).

Residues 224–525 are catalytic; that stretch reads DHRKLGKELD…LTEHYAGAFP (302 aa). Residues Cys323, His374, and His502 each coordinate Zn(2+).

The protein belongs to the class-II aminoacyl-tRNA synthetase family. In terms of assembly, homodimer. It depends on Zn(2+) as a cofactor.

The protein resides in the cytoplasm. It carries out the reaction tRNA(Thr) + L-threonine + ATP = L-threonyl-tRNA(Thr) + AMP + diphosphate + H(+). Functionally, catalyzes the attachment of threonine to tRNA(Thr) in a two-step reaction: L-threonine is first activated by ATP to form Thr-AMP and then transferred to the acceptor end of tRNA(Thr). Also edits incorrectly charged L-seryl-tRNA(Thr). The sequence is that of Threonine--tRNA ligase from Tropheryma whipplei (strain TW08/27) (Whipple's bacillus).